The chain runs to 162 residues: uncharacterized protein (162 aa).

The region spanning 78 to 154 (KNLVVVDIGA…KAIKNLHYVG (77 aa)) is the PUA domain.

This is an uncharacterized protein from Methanocaldococcus jannaschii (strain ATCC 43067 / DSM 2661 / JAL-1 / JCM 10045 / NBRC 100440) (Methanococcus jannaschii).